The following is a 67-amino-acid chain: Phycobilisome 7.8 kDa linker polypeptide, allophycocyanin-associated, core (67 aa).

The 56-residue stretch at 1–56 (MRVFKVTACVPSQTRIRTQRELQNTYFTKLVPYDNWFREQQRIMKMGGKIVKVELA) folds into the CpcD-like domain.

This sequence belongs to the phycobilisome linker protein family.

The protein resides in the cellular thylakoid membrane. Functionally, rod linker protein, associated with allophycocyanin. Linker polypeptides determine the state of aggregation and the location of the disk-shaped phycobiliprotein units within the phycobilisome and modulate their spectroscopic properties in order to mediate a directed and optimal energy transfer. This Arthrospira platensis (Spirulina platensis) protein is Phycobilisome 7.8 kDa linker polypeptide, allophycocyanin-associated, core (apcC).